A 215-amino-acid chain; its full sequence is Probable maleylacetoacetate isomerase (215 aa).

The GST N-terminal domain maps to 2–85; the sequence is MSLILYGYWR…YLDETYPAPR (84 aa). The 126-residue stretch at 90–215 folds into the GST C-terminal domain; that stretch reads RGAERYQVKA…AAPENQPDAC (126 aa).

The protein belongs to the GST superfamily. Zeta family.

The catalysed reaction is 4-maleylacetoacetate = 4-fumarylacetoacetate. It functions in the pathway amino-acid degradation; L-phenylalanine degradation; acetoacetate and fumarate from L-phenylalanine: step 5/6. The polypeptide is Probable maleylacetoacetate isomerase (maiA) (Vibrio cholerae serotype O1 (strain ATCC 39315 / El Tor Inaba N16961)).